Consider the following 755-residue polypeptide: Elongation factor G, mitochondrial (755 aa).

The N-terminal 38 residues, 1-38, are a transit peptide targeting the mitochondrion; that stretch reads MFKRVGLIAGIAGPVAGSSRFSAVSFSKRAFSASSKRC. Residues 63–344 enclose the tr-type G domain; sequence KKLRNIGISA…AIVEYLPNPS (282 aa). GTP contacts are provided by residues 72–79, 143–147, and 197–200; these read AHIDSGKT, DTPGH, and NKMD.

It belongs to the TRAFAC class translation factor GTPase superfamily. Classic translation factor GTPase family. EF-G/EF-2 subfamily.

It localises to the mitochondrion. Its pathway is protein biosynthesis; polypeptide chain elongation. In terms of biological role, mitochondrial GTPase that catalyzes the GTP-dependent ribosomal translocation step during translation elongation. During this step, the ribosome changes from the pre-translocational (PRE) to the post-translocational (POST) state as the newly formed A-site-bound peptidyl-tRNA and P-site-bound deacylated tRNA move to the P and E sites, respectively. Catalyzes the coordinated movement of the two tRNA molecules, the mRNA and conformational changes in the ribosome. The polypeptide is Elongation factor G, mitochondrial (Kluyveromyces lactis (strain ATCC 8585 / CBS 2359 / DSM 70799 / NBRC 1267 / NRRL Y-1140 / WM37) (Yeast)).